The chain runs to 387 residues: Alpha-2B adrenergic receptor (387 aa).

A helical membrane pass occupies residues 1-25; that stretch reads AIAAVITFLILFTIFGNALVILAVL. Topologically, residues 26–36 are cytoplasmic; that stretch reads TSRSLRAPQNL. Residues 37 to 62 traverse the membrane as a helical segment; the sequence is FLVSLAAADILVATLIIPFSLANELL. At 63–72 the chain is on the extracellular side; it reads GYWYFRHTWC. A disulfide bridge links Cys-72 with Cys-151. Residues 73–95 form a helical membrane-spanning segment; the sequence is XVYLALDVLFCTSSIVHLCAISL. Over 96 to 117 the chain is Cytoplasmic; sequence DRYWAVSRALEYNSKRTPRRIK. The helical transmembrane segment at 118 to 140 threads the bilayer; sequence CIILTVWLIAAAISLPPLIYKGD. Topologically, residues 141–156 are extracellular; the sequence is QDPQPRGRPQCKLNQE. The helical transmembrane segment at 157 to 180 threads the bilayer; the sequence is AWYILSSSIGSFFVPCLIMILVYL. The Cytoplasmic portion of the chain corresponds to 181–351; the sequence is RIYLIAKRSS…LTREKRFTFV (171 aa). The disordered stretch occupies residues 193 to 303; it reads RKPRAKGXPR…VPASPALACS (111 aa). A compositionally biased stretch (acidic residues) spans 279–290; the sequence is PEEEAEEEEECG. The helical transmembrane segment at 352–375 threads the bilayer; the sequence is LAVVIGVFVLCWFPFFFSYSLGAI. Residues 376-384 lie on the Extracellular side of the membrane; the sequence is CPQHCKVPH. Residues 385–387 traverse the membrane as a helical segment; it reads GLF.

It belongs to the G-protein coupled receptor 1 family. Adrenergic receptor subfamily. ADRA2B sub-subfamily. As to quaternary structure, interacts with RAB26. Interacts with PPP1R9B. Interacts with GGA1, GGA2 and GGA3.

The protein resides in the cell membrane. Functionally, alpha-2 adrenergic receptors mediate the catecholamine-induced inhibition of adenylate cyclase through the action of G proteins. This is Alpha-2B adrenergic receptor (ADRA2B) from Macroscelides proboscideus (Short-eared elephant shrew).